Consider the following 576-residue polypeptide: Sulfite reductase [NADPH] hemoprotein beta-component (576 aa).

The span at 1–12 shows a compositional bias: basic and acidic residues; that stretch reads MDAKTQPDRSRD. The disordered stretch occupies residues 1–26; the sequence is MDAKTQPDRSRDVSQPLDKLGPDETL. 4 residues coordinate [4Fe-4S] cluster: C441, C447, C486, and C490. Siroheme is bound at residue C490.

This sequence belongs to the nitrite and sulfite reductase 4Fe-4S domain family. In terms of assembly, alpha(8)-beta(8). The alpha component is a flavoprotein, the beta component is a hemoprotein. Siroheme serves as cofactor. The cofactor is [4Fe-4S] cluster.

It carries out the reaction hydrogen sulfide + 3 NADP(+) + 3 H2O = sulfite + 3 NADPH + 4 H(+). The protein operates within sulfur metabolism; hydrogen sulfide biosynthesis; hydrogen sulfide from sulfite (NADPH route): step 1/1. In terms of biological role, component of the sulfite reductase complex that catalyzes the 6-electron reduction of sulfite to sulfide. This is one of several activities required for the biosynthesis of L-cysteine from sulfate. The sequence is that of Sulfite reductase [NADPH] hemoprotein beta-component from Nitrobacter winogradskyi (strain ATCC 25391 / DSM 10237 / CIP 104748 / NCIMB 11846 / Nb-255).